The sequence spans 940 residues: Isoleucine--tRNA ligase (940 aa).

The short motif at 58-68 (PYANGSIHIGH) is the 'HIGH' region element. An L-isoleucyl-5'-AMP-binding site is contributed by E564. The 'KMSKS' region signature appears at 605–609 (KMSKS). K608 is a binding site for ATP. C903, C906, C923, and C926 together coordinate Zn(2+).

This sequence belongs to the class-I aminoacyl-tRNA synthetase family. IleS type 1 subfamily. As to quaternary structure, monomer. Zn(2+) is required as a cofactor.

The protein resides in the cytoplasm. It catalyses the reaction tRNA(Ile) + L-isoleucine + ATP = L-isoleucyl-tRNA(Ile) + AMP + diphosphate. In terms of biological role, catalyzes the attachment of isoleucine to tRNA(Ile). As IleRS can inadvertently accommodate and process structurally similar amino acids such as valine, to avoid such errors it has two additional distinct tRNA(Ile)-dependent editing activities. One activity is designated as 'pretransfer' editing and involves the hydrolysis of activated Val-AMP. The other activity is designated 'posttransfer' editing and involves deacylation of mischarged Val-tRNA(Ile). The protein is Isoleucine--tRNA ligase of Shewanella sp. (strain MR-4).